A 294-amino-acid polypeptide reads, in one-letter code: Golgi phosphoprotein 3 homolog sauron (294 aa).

A disordered region spans residues 1-52 (MNRSDGLVRRSVKPRENGGAEGGLNANTPDDNQDALDNLKDQEDNIDDGDSK). Over residues 37–52 (DNLKDQEDNIDDGDSK) the composition is skewed to basic and acidic residues. 4 residues coordinate a 1,2-diacyl-sn-glycero-3-phospho-(1D-myo-inositol 4-phosphate): Trp77, Arg86, Lys167, and Arg170. The interval 186-197 (EKQNFLLFDMTT) is beta-hairpin required for oligomerization.

The protein belongs to the GOLPH3/VPS74 family. Homooligomer. Interacts with botv, Ext2 and ttv. Interacts with Vti1. Interacts with Vps35, Rab5, Chc, Rab11, zip, Pav and Septin1.

The protein localises to the golgi apparatus membrane. The protein resides in the cytoplasmic vesicle. It localises to the cleavage furrow. Its function is as follows. Phosphatidylinositol-4-phosphate-binding protein that links Golgi membranes to the cytoskeleton and may participate in the tensile force required for vesicle budding from the Golgi. Thereby, may play a role in Golgi membrane trafficking and could indirectly give its flattened shape to the Golgi apparatus. May also bind to the coatomer to regulate Golgi membrane trafficking. May play a role in anterograde transport from the Golgi to the plasma membrane and regulate secretion. Also involved in the control of the localization of Golgi enzymes through interaction with their cytoplasmic part. Functions in cytokinesis by regulating contractile ring formation and vesicle trafficking during cleavage furrow ingression. May also have a role in the intital steps of central spindle formation. Can also bind phosphatidylinositol-3-phosphate and phosphatidylinositol-5-phosphate in vitro. The polypeptide is Golgi phosphoprotein 3 homolog sauron (Drosophila melanogaster (Fruit fly)).